The following is a 486-amino-acid chain: RAC-beta serine/threonine-protein kinase A (486 aa).

Residues 5 to 110 enclose the PH domain; that stretch reads MVIKEGWLQK…WIIAIQTVAN (106 aa). O-linked (GlcNAc) serine glycosylation is found at Ser-133 and Ser-136. Residues 157 to 414 enclose the Protein kinase domain; that stretch reads FDYLKLLGKG…AQEVMSHRFF (258 aa). Residues 163 to 171 and Lys-186 each bind ATP; that span reads LGKGTFGKV. Catalysis depends on Asp-280, which acts as the Proton acceptor. The O-linked (GlcNAc) threonine glycan is linked to Thr-311. Residue Thr-314 is modified to Phosphothreonine. An O-linked (GlcNAc) threonine glycan is attached at Thr-318. Residues 415–486 enclose the AGC-kinase C-terminal domain; sequence VSINWQDVTE…QFSYSASIRE (72 aa). Residues 455–486 form a disordered region; it reads LTPPDRYDNLDALESDQRPHFPQFSYSASIRE. Residues 459–473 are compositionally biased toward basic and acidic residues; the sequence is DRYDNLDALESDQRP. Position 479 is a phosphoserine (Ser-479). O-linked (GlcNAc) serine; alternate glycosylation occurs at Ser-479.

It belongs to the protein kinase superfamily. AGC Ser/Thr protein kinase family. RAC subfamily. In terms of processing, phosphorylation on Thr-314 and Ser-479 is required for full activity. Phosphorylation of the activation loop at Thr-314 by PDPK1/PDK1 is a prerequisite for full activation. Phosphorylation by mTORC2 at Ser-479 in response to growth factors plays a key role in AKT1 activation by facilitating subsequent phosphorylation of the activation loop by PDPK1/PDK1.

It carries out the reaction L-seryl-[protein] + ATP = O-phospho-L-seryl-[protein] + ADP + H(+). The enzyme catalyses L-threonyl-[protein] + ATP = O-phospho-L-threonyl-[protein] + ADP + H(+). Its activity is regulated as follows. Two specific sites, one in the kinase domain (Thr-314) and the other in the C-terminal regulatory region (Ser-479), need to be phosphorylated for its full activation. Akt2-a is one of several closely related serine/threonine-protein kinases known as the AKT kinase, and which regulate many processes including metabolism, proliferation, cell survival, growth and angiogenesis. This is mediated through serine and/or threonine phosphorylation of a range of downstream substrates. Over 100 substrate candidates have been reported so far, but for most of them, no isoform specificity has been reported. May be involved in the inhibition of ciliogenesis. This chain is RAC-beta serine/threonine-protein kinase A (akt2-a), found in Xenopus laevis (African clawed frog).